The primary structure comprises 493 residues: MNPTTSGSAVSTLEEKNLGRIAQIIGPVLDVVFPLGKMPNIYNALVVKGRDTVGQQINVTCEVQQLLGNNRVRAVAMSATDGLTRGMEVIDTGAALSVPVGGATLGRIFNVLGEPVDNLGPVDTRTTSPIHRSAPAFIQLDTKLSIFETGIKVVDLLAPYRRGGKIGLFGGAGVGKTVLIMELINNIAKAHGGVSVFGGVGERTREGNDLYMEMKESGVINEKNIAESKVALVYGQMNEPPGARMRVGLTALTMAEYFRDVNEQDVLLFIDNIFRFVQAGSEVSALLGRMPSAVGYQPTLSTEMGSLQERITSTKEGSITSIQAVYVPADDLTDPAPATTFAHLDATTVLSRGLAAKGIYPAVDPLDSTSTMLQPRIVGEEHYETAQRVKQTLQRYKELQDIIAILGLDELSEEDRLTVARARKIERFLSQPFFVAEVFTGSPGKYVGLTETIRGFQLILSGELDGLPEQAFYLVGNIDEATAKAMNLEGEKK.

Gly170 to Thr177 provides a ligand contact to ATP.

It belongs to the ATPase alpha/beta chains family. As to quaternary structure, F-type ATPases have 2 components, CF(1) - the catalytic core - and CF(0) - the membrane proton channel. CF(1) has five subunits: alpha(3), beta(3), gamma(1), delta(1), epsilon(1). CF(0) has four main subunits: a(1), b(1), b'(1) and c(9-12).

The protein localises to the plastid. It localises to the chloroplast thylakoid membrane. It catalyses the reaction ATP + H2O + 4 H(+)(in) = ADP + phosphate + 5 H(+)(out). Its function is as follows. Produces ATP from ADP in the presence of a proton gradient across the membrane. The catalytic sites are hosted primarily by the beta subunits. The sequence is that of ATP synthase subunit beta, chloroplastic from Lachenalia pusilla (Cape cowslips).